The sequence spans 156 residues: MIQSQHSQTARHALAETVVLAKARKNLSFAQLTEGTGLSEAFVTAALLGQHALPADAARVVADKLGLDDDAVLLLQMIPLRGSIDDRVPTDPTIYRFYEMLQVYGTTLKALVHEKFGDGIISAINFRLDVKKVDDPEGGSRAVITLDGKYLPTKPF.

Catalysis depends on residues Arg-96, Glu-99, and Ser-122.

It belongs to the cyanase family.

It catalyses the reaction cyanate + hydrogencarbonate + 3 H(+) = NH4(+) + 2 CO2. Catalyzes the reaction of cyanate with bicarbonate to produce ammonia and carbon dioxide. The sequence is that of Cyanate hydratase from Burkholderia orbicola (strain MC0-3).